A 94-amino-acid chain; its full sequence is ATP synthase F(0) complex subunit f, mitochondrial (94 aa).

Position 2 is an N-acetylalanine (A2). S3 is subject to Phosphoserine. The residue at position 22 (K22) is an N6-acetyllysine. Residues 68 to 85 traverse the membrane as a helical segment; that stretch reads MVLACYVLFSYSFSYKHL.

The protein belongs to the ATPase F chain family. In terms of assembly, component of the ATP synthase complex composed at least of ATP5F1A/subunit alpha, ATP5F1B/subunit beta, ATP5MC1/subunit c (homooctomer), MT-ATP6/subunit a, MT-ATP8/subunit 8, ATP5ME/subunit e, ATP5MF/subunit f, ATP5MG/subunit g, ATP5MK/subunit k, ATP5MJ/subunit j, ATP5F1C/subunit gamma, ATP5F1D/subunit delta, ATP5F1E/subunit epsilon, ATP5PF/subunit F6, ATP5PB/subunit b, ATP5PD/subunit d, ATP5PO/subunit OSCP. ATP synthase complex consists of a soluble F(1) head domain (subunits alpha(3) and beta(3)) - the catalytic core - and a membrane F(0) domain - the membrane proton channel (subunits c, a, 8, e, f, g, k and j). These two domains are linked by a central stalk (subunits gamma, delta, and epsilon) rotating inside the F1 region and a stationary peripheral stalk (subunits F6, b, d, and OSCP).

The protein localises to the mitochondrion. It is found in the mitochondrion inner membrane. In terms of biological role, subunit f, of the mitochondrial membrane ATP synthase complex (F(1)F(0) ATP synthase or Complex V) that produces ATP from ADP in the presence of a proton gradient across the membrane which is generated by electron transport complexes of the respiratory chain. ATP synthase complex consist of a soluble F(1) head domain - the catalytic core - and a membrane F(1) domain - the membrane proton channel. These two domains are linked by a central stalk rotating inside the F(1) region and a stationary peripheral stalk. During catalysis, ATP synthesis in the catalytic domain of F(1) is coupled via a rotary mechanism of the central stalk subunits to proton translocation. In vivo, can only synthesize ATP although its ATP hydrolase activity can be activated artificially in vitro. Part of the complex F(0) domain. This Homo sapiens (Human) protein is ATP synthase F(0) complex subunit f, mitochondrial.